Here is a 1086-residue protein sequence, read N- to C-terminus: Bifunctional helicase and thymine dioxygenase JBP2 (1086 aa).

The interval 1–518 is thymine dioxygenase; it reads MPVPSHVSVA…PPIYLPGRLL (518 aa). Residues 187–220 form a disordered region; the sequence is DESNRGVLFNSDSFGNGRGGSSISSSERSVDEND. Fe cation contacts are provided by His393, Asp395, and His443. A 2-oxoglutarate-binding site is contributed by Arg457. A DNA Helicase region spans residues 519 to 1084; that stretch reads EVLSPVQQAA…RHGDTVRSES (566 aa). A Helicase ATP-binding domain is found at 533–708; that stretch reads VDRLSKGNGC…YRLIGWINSD (176 aa). ATP is bound at residue 546–553; sequence LTMGLGKT. Residues 659–662 carry the DEAH box motif; it reads DEGH. The 159-residue stretch at 883–1041 folds into the Helicase C-terminal domain; the sequence is VLISILHSIR…RAVPPEELLD (159 aa).

The protein in the C-terminal section; belongs to the SNF2/RAD54 helicase family. In the N-terminal section; belongs to the TET family. JBP2 subfamily. The cofactor is Fe(2+).

It is found in the nucleus. The catalysed reaction is ATP + H2O = ADP + phosphate + H(+). It catalyses the reaction thymine + 2-oxoglutarate + O2 = 5-hydroxymethyluracil + succinate + CO2. Dioxygenase that catalyzes the first step of DNA base J (beta-d-glucosyl-HOMedU) biosynthesis by converting thymine to 5-hydroxymethyluracil (HOMedU). DNA base J is a hypermodified thymidine residue found in the genome of kinetoplastid parasites, which is localized primarily to repetitive DNA, namely the telomeres, and is implicated in the regulation of antigenic variation. Probably also acts as a DNA helicase. Recognizes and binds specific regions of the genome, hydrolyzes ATP and allows the DNA base J de novo synthesis. Involved in initial synthesis of DNA base J, JBP1 being able to act via the basal level of DNA base J and propagate further synthesis. In contrast to JBP1, it does not specifically bind DNA base J, however it binds chromatin. This Trypanosoma cruzi (strain CL Brener) protein is Bifunctional helicase and thymine dioxygenase JBP2 (JBP2).